Here is a 412-residue protein sequence, read N- to C-terminus: Putative competence-damage inducible protein (412 aa).

It belongs to the CinA family.

The sequence is that of Putative competence-damage inducible protein from Bacillus anthracis.